A 503-amino-acid chain; its full sequence is MKCPYCSSAQGRCTTTSSGRSITECSSCGRVMEERQTQNHHLFHLRAQDTPLCLVTSDLQTAAQPSPEDEEDPFEPTGFITAFSTWSLEPSPIFARSSLSFSGHLAELERTLELASSTSNSNSSTVVVDNLRAYMQIIDVASILGLDCDISEHAFQLFRDCCSATCLRNRSVEALATACLVQAIREAQEPRTLQEISIAANVQQKEIGKYIKILGEALQLSQPINSNSISVHMPRFCTLLQLNKSAQELATHIGEVVINKCFCTRRNPISISAAAIYLACQLEDKRKTQAEICKITGLTEVTLRKVYKELLENWDDLLPSNYTPAVPPEKAFPTTTISTTRSTTPRAVDPPEPSFVEKDKPSAKPIETFDHTYQQPKGKEDKQPKFRQPWLFGTASVMNPAEMISEPAKPNAMDYEKQQLDKQQQQQLGDKETLPIYLRDHNPFPSNPSPSTGISTINWSFRPSVVPGSSSNLPVIHPPKLPPGYAEIRGSGSRNADNPHGDF.

The TFIIB-type zinc-finger motif lies at 1 to 33 (MKCPYCSSAQGRCTTTSSGRSITECSSCGRVME). Disordered regions lie at residues 328-366 (PEKA…AKPI), 411-431 (NAMD…LGDK), 436-455 (IYLR…TGIS), and 468-503 (GSSS…HGDF). A compositionally biased stretch (low complexity) spans 333 to 346 (PTTTISTTRSTTPR). Residues 355–366 (FVEKDKPSAKPI) show a composition bias toward basic and acidic residues.

Post-translationally, ubiquinated. Subsequent degradation by the proteasome pathway. In terms of tissue distribution, widely expressed.

Its subcellular location is the plastid. It is found in the chloroplast outer membrane. It localises to the nucleus. Functionally, plant-specific TFIIB-related protein that may be involved in an intracellular signaling pathway between plastids and the nucleus. May act as general transcription factor (GTF) of RNA polymerase I-dependent transcription and rRNA synthesis. Forms a ternary complex with TBP2 and the rDNA promoter region. The chain is Plant-specific TFIIB-related protein 1 from Arabidopsis thaliana (Mouse-ear cress).